Consider the following 266-residue polypeptide: Undecaprenyl-diphosphatase (266 aa).

The next 8 helical transmembrane spans lie at 4–24 (ILSAIILGIIQGITEFLPISS), 39–59 (LSIIFDIYLHLATVLVIIIYY), 86–106 (LKLILLILIITIVTGVVGTFI), 112–132 (MFTLSFVLINFIITGILILML), 145–165 (ILLAGIFMGLMQGLGALPGIS), 182–202 (KSAFEISFLSLIPIVFGAILL), 210–230 (IFMVLNFFEINLGALVAFVVG), and 246–266 (LYYFSIYLFALSIIVCYFVRI).

It belongs to the UppP family.

It is found in the cell inner membrane. It catalyses the reaction di-trans,octa-cis-undecaprenyl diphosphate + H2O = di-trans,octa-cis-undecaprenyl phosphate + phosphate + H(+). Catalyzes the dephosphorylation of undecaprenyl diphosphate (UPP). Confers resistance to bacitracin. This Borreliella burgdorferi (strain ATCC 35210 / DSM 4680 / CIP 102532 / B31) (Borrelia burgdorferi) protein is Undecaprenyl-diphosphatase.